The primary structure comprises 439 residues: NAD kinase (439 aa).

Phosphoserine is present on residues serine 46, serine 48, serine 50, serine 55, and serine 64.

It belongs to the NAD kinase family. A divalent metal cation is required as a cofactor.

It carries out the reaction NAD(+) + ATP = ADP + NADP(+) + H(+). The protein is NAD kinase (Nadk) of Mus musculus (Mouse).